Reading from the N-terminus, the 443-residue chain is Protein PRRC1 (443 aa).

Residues 1–165 form a disordered region; that stretch reads MMEESGIETT…FSAPPVTGIL (165 aa). Polar residues predominate over residues 29–45; it reads EAHSAATSSFSSPNVSG. Residues 59-72 are compositionally biased toward pro residues; sequence PSLPPVQPSAPPPF. Composition is skewed to low complexity over residues 81–96 and 109–134; these read VPLSGTSVPPSVSPSP and PPATSASGALLSAPPSGPPISGFSVG. Residue Ser406 is modified to Phosphoserine.

This sequence belongs to the PRRC1 family. In terms of assembly, interacts with PRKAR1A; resulting in PKA activation.

The protein localises to the golgi apparatus. Its subcellular location is the cytoplasm. May act as a regulator of the protein kinase A (PKA) during embryonic development. The sequence is that of Protein PRRC1 (Prrc1) from Mus musculus (Mouse).